Consider the following 366-residue polypeptide: Spore germination protein GerM (366 aa).

2 disordered regions span residues 42–72 (TFVN…KADQ) and 346–366 (EKGE…TGSF). Residues 58–69 (KKTESEKSDTAK) show a composition bias toward basic and acidic residues. A compositionally biased stretch (polar residues) spans 357 to 366 (RPSQVNTGSF).

Unknown. Affects both sporulation and germination. This is Spore germination protein GerM (gerM) from Bacillus subtilis (strain 168).